We begin with the raw amino-acid sequence, 209 residues long: Lipid A acyltransferase PagP (209 aa).

The N-terminal stretch at 1–24 is a signal peptide; that stretch reads MHLKRALITLSLITLPIIPFSSYA. Active-site residues include His81, Asp124, and Ser125.

It belongs to the lipid A palmitoyltransferase family. In terms of assembly, homodimer.

It is found in the cell outer membrane. The catalysed reaction is a lipid A + a 1,2-diacyl-sn-glycero-3-phosphocholine = a hepta-acyl lipid A + a 2-acyl-sn-glycero-3-phosphocholine. The enzyme catalyses a lipid IVA + a 1,2-diacyl-sn-glycero-3-phosphocholine = a lipid IVB + a 2-acyl-sn-glycero-3-phosphocholine. It carries out the reaction a lipid IIA + a 1,2-diacyl-sn-glycero-3-phosphocholine = a lipid IIB + a 2-acyl-sn-glycero-3-phosphocholine. Transfers a fatty acid residue from the sn-1 position of a phospholipid to the N-linked hydroxyfatty acid chain on the proximal unit of lipid A or its precursors. This is Lipid A acyltransferase PagP from Pectobacterium parmentieri (strain WPP163) (Pectobacterium wasabiae (strain WPP163)).